Here is a 330-residue protein sequence, read N- to C-terminus: Putative pentatricopeptide repeat-containing protein At5g36300 (330 aa).

PPR repeat units follow at residues 10–44 (SLSM…GSRP), 45–75 (DPLS…VVRF), 83–113 (VRLY…KFRL), 114–148 (NSFV…GLPM), 149–179 (DVEI…LQRS), 185–215 (NIRT…IFED), 231–265 (SANL…GIEP), 266–296 (NLIM…IKET), and 302–330 (DVVT…LVTL).

It belongs to the PPR family. P subfamily.

The protein is Putative pentatricopeptide repeat-containing protein At5g36300 of Arabidopsis thaliana (Mouse-ear cress).